The following is a 435-amino-acid chain: tRNA(Ile)-lysidine synthase (435 aa).

Residue Ser23–Ser28 coordinates ATP.

Belongs to the tRNA(Ile)-lysidine synthase family.

The protein resides in the cytoplasm. The enzyme catalyses cytidine(34) in tRNA(Ile2) + L-lysine + ATP = lysidine(34) in tRNA(Ile2) + AMP + diphosphate + H(+). Functionally, ligates lysine onto the cytidine present at position 34 of the AUA codon-specific tRNA(Ile) that contains the anticodon CAU, in an ATP-dependent manner. Cytidine is converted to lysidine, thus changing the amino acid specificity of the tRNA from methionine to isoleucine. In Xanthomonas campestris pv. campestris (strain 8004), this protein is tRNA(Ile)-lysidine synthase.